We begin with the raw amino-acid sequence, 399 residues long: Elongation factor Tu (399 aa).

A tr-type G domain is found at 10–209 (KPHVNIGTIG…AVDDYIPTPV (200 aa)). Residues 19–26 (GHVDHGKT) form a G1 region. 19-26 (GHVDHGKT) contributes to the GTP binding site. T26 provides a ligand contact to Mg(2+). The segment at 62-66 (GITIN) is G2. Residues 83 to 86 (DCPG) are G3. GTP is bound by residues 83-87 (DCPGH) and 138-141 (NKCD). The segment at 138–141 (NKCD) is G4. The G5 stretch occupies residues 175-177 (SAY).

It belongs to the TRAFAC class translation factor GTPase superfamily. Classic translation factor GTPase family. EF-Tu/EF-1A subfamily. As to quaternary structure, monomer.

The protein localises to the cytoplasm. The catalysed reaction is GTP + H2O = GDP + phosphate + H(+). GTP hydrolase that promotes the GTP-dependent binding of aminoacyl-tRNA to the A-site of ribosomes during protein biosynthesis. In Bifidobacterium longum subsp. infantis (strain ATCC 15697 / DSM 20088 / JCM 1222 / NCTC 11817 / S12), this protein is Elongation factor Tu.